The following is a 747-amino-acid chain: Kinesin-like protein KIF3B (747 aa).

An N-acetylmethionine modification is found at M1. S2 is modified (N-acetylserine; in Kinesin-like protein KIF3B, N-terminally processed). Residues 9-340 (SVRVVVRCRP…LRYANRAKNI (332 aa)) form the Kinesin motor domain. Residue 96-103 (GQTGTGKT) coordinates ATP. Residues 346–579 (VNEDPKDALL…EQTQNELTRE (234 aa)) adopt a coiled-coil conformation. Disordered regions lie at residues 374–412 (IGRRKRREKRREGGGSGGGGEEEEEEGEEGEEEGDDKDD) and 699–747 (QVDA…LVPK). Residues 393-411 (GEEEEEEGEEGEEEGDDKD) show a composition bias toward acidic residues. The tract at residues 580 to 747 (LKLKHLIIEN…YPQSRGLVPK (168 aa)) is globular. Residues 701–710 (DASSFESTAN) show a composition bias toward polar residues. A compositionally biased stretch (basic residues) spans 711–721 (KKSKARPKSGR). A compositionally biased stretch (low complexity) spans 722–735 (KSGSSSSSSGTPAS).

Belongs to the TRAFAC class myosin-kinesin ATPase superfamily. Kinesin family. Kinesin II subfamily. Heterodimer of KIF3A and KIF3B. KIF3A/KIF3B heterodimer interacts with KIFAP3 forming a heterotrimeric (KIF3A/KIF3B/KIFAP3) complex. Interacts directly with IFT20. Interacts with the SMC3 subunit of the cohesin complex. Interacts with FLCN.

It localises to the cytoplasm. The protein localises to the cytoskeleton. Its subcellular location is the cell projection. The protein resides in the cilium. It is found in the dendritic spine. Microtubule-based molecular motor that transport intracellular cargos, such as vesicles, organelles and protein complexes. Uses ATP hydrolysis to generate force to bind and move along the microtubule. Plays a role in cilia formation. Involved in photoreceptor integrity and opsin trafficking in rod photoreceptors. Transports vesicles containing N-methyl-D-aspartate (NMDA) receptor subunit GRIN2A into neuronal dendrites. The polypeptide is Kinesin-like protein KIF3B (KIF3B) (Homo sapiens (Human)).